Here is a 161-residue protein sequence, read N- to C-terminus: MKFFAVLALCIVGAIASPLTADEASLVQSSWKAVSHNEVDILAAVFAAYPDIQAKFPQFAGKDLASIKDTGAFATHATRIVSFLSEVIALSGNESNASAVNSLVSKLGDDHKARGVSAAQFGEFRTALVAYLSNHVSWGDNVAAAWNKALDNTYAIVVPRL.

Positions 1–16 (MKFFAVLALCIVGAIA) are cleaved as a signal peptide. A Globin domain is found at 18–161 (PLTADEASLV…NTYAIVVPRL (144 aa)). Residues His-76 and His-111 each contribute to the heme b site.

Belongs to the globin family. In terms of assembly, homodimer.

This Chironomus thummi thummi (Midge) protein is Globin CTT-VIIB-3 (CTT-7B3).